The following is a 565-amino-acid chain: Anaphase-promoting complex subunit 7 (565 aa).

TPR repeat units lie at residues Glu-101–Thr-134, Leu-169–Leu-202, Ser-203–Asn-236, Val-237–Leu-270, Val-339–Arg-372, Leu-373–Asn-406, Ala-407–Tyr-441, Ile-442–Asp-474, Cys-475–Asp-508, and Gln-509–Glu-531. Lys-229 is subject to N6-acetyllysine. Over residues Glu-513–Ser-523 the composition is skewed to basic and acidic residues. The tract at residues Glu-513–Gln-565 is disordered. Acidic residues predominate over residues Thr-528–Asp-549.

Belongs to the APC7 family. In terms of assembly, V-shaped homodimer. The mammalian APC/C is composed at least of 14 distinct subunits ANAPC1, ANAPC2, CDC27/APC3, ANAPC4, ANAPC5, CDC16/APC6, ANAPC7, CDC23/APC8, ANAPC10, ANAPC11, CDC26/APC12, ANAPC13, ANAPC15 and ANAPC16 that assemble into a complex of at least 19 chains with a combined molecular mass of around 1.2 MDa; APC/C interacts with FZR1 and FBXO5.

It is found in the cytoplasm. The protein localises to the cytoskeleton. The protein resides in the nucleus. Its subcellular location is the spindle. The protein operates within protein modification; protein ubiquitination. Component of the anaphase promoting complex/cyclosome (APC/C), a cell cycle-regulated E3 ubiquitin ligase that controls progression through mitosis and the G1 phase of the cell cycle. The APC/C complex acts by mediating ubiquitination and subsequent degradation of target proteins: it mainly mediates the formation of 'Lys-11'-linked polyubiquitin chains and, to a lower extent, the formation of 'Lys-48'- and 'Lys-63'-linked polyubiquitin chains. The APC/C complex catalyzes assembly of branched 'Lys-11'-/'Lys-48'-linked branched ubiquitin chains on target proteins. APC7 is not required for the assembly of the APC/C complex, but has an enzyme-substrate adapter activity mediating the processive ubiquitination of specific substrates. Involved in brain development through the specific ubiquitination and clearance of MKI67 from constitutive heterochromatin after neuronal progenitors exit mitosis. This is Anaphase-promoting complex subunit 7 from Homo sapiens (Human).